We begin with the raw amino-acid sequence, 1011 residues long: Ankyrin repeat domain-containing protein 18B (1011 aa).

5 ANK repeats span residues 67 to 96 (KDRT…QINI), 100 to 129 (LNRT…NPNI), 133 to 162 (YGNT…NIEA), 166 to 195 (EGNT…NIHA), and 199 to 228 (FKRT…HISS). Disordered regions lie at residues 264 to 330 (LRND…GKKK) and 533 to 554 (MHPN…SEER). Coiled coils occupy residues 277-319 (ENLK…ENKQ), 385-639 (NEEM…ELVD), 692-722 (ISLL…CLEM), and 752-908 (FKKL…EAFA). Positions 280-293 (KKRKKRKKLKKRKE) are enriched in basic residues. The segment covering 294 to 319 (GAKAEHNLKVASEEKQERLERSENKQ) has biased composition (basic and acidic residues).

The sequence is that of Ankyrin repeat domain-containing protein 18B (ANKRD18B) from Homo sapiens (Human).